A 225-amino-acid polypeptide reads, in one-letter code: UPF0758 protein NMCC_1157 (225 aa).

An MPN domain is found at 102–224 (VLSDPDTVAD…VRSFRQLGLM (123 aa)). Zn(2+)-binding residues include histidine 173, histidine 175, and aspartate 186. The short motif at 173–186 (HNHPGGSPEPSQED) is the JAMM motif element.

The protein belongs to the UPF0758 family.

In Neisseria meningitidis serogroup C (strain 053442), this protein is UPF0758 protein NMCC_1157.